Here is a 185-residue protein sequence, read N- to C-terminus: Elongation factor P (185 aa).

This sequence belongs to the elongation factor P family.

It is found in the cytoplasm. It participates in protein biosynthesis; polypeptide chain elongation. Involved in peptide bond synthesis. Stimulates efficient translation and peptide-bond synthesis on native or reconstituted 70S ribosomes in vitro. Probably functions indirectly by altering the affinity of the ribosome for aminoacyl-tRNA, thus increasing their reactivity as acceptors for peptidyl transferase. This Alkaliphilus oremlandii (strain OhILAs) (Clostridium oremlandii (strain OhILAs)) protein is Elongation factor P.